A 273-amino-acid polypeptide reads, in one-letter code: 4-hydroxy-tetrahydrodipicolinate reductase (273 aa).

Position 12 to 17 (12 to 17 (GSGGRM)) interacts with NAD(+). NADP(+) is bound at residue Arg-39. Residues 102 to 104 (GTT) and 126 to 129 (AANF) each bind NAD(+). His-159 acts as the Proton donor/acceptor in catalysis. Residue His-160 participates in (S)-2,3,4,5-tetrahydrodipicolinate binding. Lys-163 (proton donor) is an active-site residue. 169 to 170 (GT) provides a ligand contact to (S)-2,3,4,5-tetrahydrodipicolinate.

The protein belongs to the DapB family. In terms of assembly, homotetramer.

It localises to the cytoplasm. It carries out the reaction (S)-2,3,4,5-tetrahydrodipicolinate + NAD(+) + H2O = (2S,4S)-4-hydroxy-2,3,4,5-tetrahydrodipicolinate + NADH + H(+). It catalyses the reaction (S)-2,3,4,5-tetrahydrodipicolinate + NADP(+) + H2O = (2S,4S)-4-hydroxy-2,3,4,5-tetrahydrodipicolinate + NADPH + H(+). The protein operates within amino-acid biosynthesis; L-lysine biosynthesis via DAP pathway; (S)-tetrahydrodipicolinate from L-aspartate: step 4/4. Its function is as follows. Catalyzes the conversion of 4-hydroxy-tetrahydrodipicolinate (HTPA) to tetrahydrodipicolinate. This is 4-hydroxy-tetrahydrodipicolinate reductase from Serratia proteamaculans (strain 568).